A 430-amino-acid chain; its full sequence is Enolase (430 aa).

Position 163 (Gln163) interacts with (2R)-2-phosphoglycerate. The active-site Proton donor is the Glu205. The Mg(2+) site is built by Asp242, Glu285, and Asp312. (2R)-2-phosphoglycerate is bound by residues Lys337, Arg366, Ser367, and Lys388. The active-site Proton acceptor is Lys337.

It belongs to the enolase family. The cofactor is Mg(2+).

It localises to the cytoplasm. Its subcellular location is the secreted. It is found in the cell surface. The catalysed reaction is (2R)-2-phosphoglycerate = phosphoenolpyruvate + H2O. Its pathway is carbohydrate degradation; glycolysis; pyruvate from D-glyceraldehyde 3-phosphate: step 4/5. Functionally, catalyzes the reversible conversion of 2-phosphoglycerate (2-PG) into phosphoenolpyruvate (PEP). It is essential for the degradation of carbohydrates via glycolysis. This Rubrobacter xylanophilus (strain DSM 9941 / JCM 11954 / NBRC 16129 / PRD-1) protein is Enolase.